Reading from the N-terminus, the 337-residue chain is Serpentine receptor class delta-50 (337 aa).

The next 7 membrane-spanning stretches (helical) occupy residues 10-30 (VLIL…SQLL), 48-68 (IYLF…FVLQ), 107-127 (VLFH…IIAF), 147-167 (QLVI…LSPN), 202-222 (SSQT…ALVF), 250-270 (GLTL…TYYI), and 280-300 (LFVE…DPLL).

The protein belongs to the nematode receptor-like protein srd family.

It localises to the membrane. The polypeptide is Serpentine receptor class delta-50 (Caenorhabditis elegans).